Reading from the N-terminus, the 118-residue chain is Small ribosomal subunit protein uS13 (118 aa).

The tract at residues arginine 93–arginine 118 is disordered.

This sequence belongs to the universal ribosomal protein uS13 family. Part of the 30S ribosomal subunit. Forms a loose heterodimer with protein S19. Forms two bridges to the 50S subunit in the 70S ribosome.

In terms of biological role, located at the top of the head of the 30S subunit, it contacts several helices of the 16S rRNA. In the 70S ribosome it contacts the 23S rRNA (bridge B1a) and protein L5 of the 50S subunit (bridge B1b), connecting the 2 subunits; these bridges are implicated in subunit movement. Contacts the tRNAs in the A and P-sites. The chain is Small ribosomal subunit protein uS13 from Saccharophagus degradans (strain 2-40 / ATCC 43961 / DSM 17024).